A 329-amino-acid polypeptide reads, in one-letter code: Ig gamma-2 chain C region (329 aa).

Disulfide bonds link Cys-28–Cys-79, Cys-142–Cys-202, and Cys-248–Cys-308. Asn-178 carries an N-linked (GlcNAc...) asparagine glycan.

The protein localises to the secreted. The chain is Ig gamma-2 chain C region from Cavia porcellus (Guinea pig).